The following is a 209-amino-acid chain: Uracil phosphoribosyltransferase (209 aa).

5-phospho-alpha-D-ribose 1-diphosphate-binding positions include R79, R104, and 131-139 (DPMLATGNS). Uracil-binding positions include I194 and 199–201 (GDA). D200 contributes to the 5-phospho-alpha-D-ribose 1-diphosphate binding site.

Belongs to the UPRTase family. Mg(2+) serves as cofactor.

The enzyme catalyses UMP + diphosphate = 5-phospho-alpha-D-ribose 1-diphosphate + uracil. It participates in pyrimidine metabolism; UMP biosynthesis via salvage pathway; UMP from uracil: step 1/1. Its activity is regulated as follows. Allosterically activated by GTP. Its function is as follows. Catalyzes the conversion of uracil and 5-phospho-alpha-D-ribose 1-diphosphate (PRPP) to UMP and diphosphate. The sequence is that of Uracil phosphoribosyltransferase from Variovorax paradoxus (strain S110).